The chain runs to 750 residues: Photosystem I P700 chlorophyll a apoprotein A1 (750 aa).

The next 8 helical transmembrane spans lie at 70 to 93 (VFSAHFGQLSIIFLWLSGMYFHGA), 156 to 179 (LYCTGIGALVCAALMLFAGWFHYH), 195 to 219 (LNHHLAGLLGLGSLSWAGHQVHVSL), 291 to 309 (IAHHHLAIAILFLIAGHMY), 346 to 369 (WHAQLSLNLAMLGSLTIIVAHHMY), 385 to 411 (LSLFTHHMWIGGFLIVGAAAHAAIFMV), 433 to 455 (AIISHLNWVCIFLGFHSFGLYIH), and 531 to 549 (FLVHHIHAFTIHVPVLILL). Positions 573 and 582 each coordinate [4Fe-4S] cluster. 2 helical membrane passes run 589–610 (HVFLGLFWMYNAISVVIFHFSW) and 664–686 (LSAYGLFFLGAHFVWAFSLMFLF). Chlorophyll a' is bound at residue His-675. 2 residues coordinate chlorophyll a: Met-683 and Tyr-691. Residue Trp-692 coordinates phylloquinone. Residues 724-744 (AVGVTHYLLGGIATTWAFFLA) traverse the membrane as a helical segment.

It belongs to the PsaA/PsaB family. In terms of assembly, the PsaA/B heterodimer binds the P700 chlorophyll special pair and subsequent electron acceptors. PSI consists of a core antenna complex that captures photons, and an electron transfer chain that converts photonic excitation into a charge separation. The eukaryotic PSI reaction center is composed of at least 11 subunits. P700 is a chlorophyll a/chlorophyll a' dimer, A0 is one or more chlorophyll a, A1 is one or both phylloquinones and FX is a shared 4Fe-4S iron-sulfur center. is required as a cofactor.

It is found in the plastid. The protein resides in the chloroplast thylakoid membrane. It carries out the reaction reduced [plastocyanin] + hnu + oxidized [2Fe-2S]-[ferredoxin] = oxidized [plastocyanin] + reduced [2Fe-2S]-[ferredoxin]. Functionally, psaA and PsaB bind P700, the primary electron donor of photosystem I (PSI), as well as the electron acceptors A0, A1 and FX. PSI is a plastocyanin-ferredoxin oxidoreductase, converting photonic excitation into a charge separation, which transfers an electron from the donor P700 chlorophyll pair to the spectroscopically characterized acceptors A0, A1, FX, FA and FB in turn. Oxidized P700 is reduced on the lumenal side of the thylakoid membrane by plastocyanin. The polypeptide is Photosystem I P700 chlorophyll a apoprotein A1 (Crucihimalaya wallichii (Rock-cress)).